The sequence spans 229 residues: MAKKKAFIPFFDFTSIVFLPWLISLCCNKSLKTWITNWWNTRQCETFLNDIQEKSILEKFIQLEELFQLDEMIKEYPETDLQQFRLGIHKETIQFIKIHNEYRIHTILHFSTNLISFVILSGYSFWGKEKLFILNSWVQEFLYNLSDTIKAFSILLLTDLCIGFHSPHGWELMIGYIYKDFGFAHYEQILSGLVSTFPVILDTIFKYWIFRYLNRVSPSLVVIYHAIND.

Transmembrane regions (helical) follow at residues 6 to 26 (AFIP…ISLC), 107 to 127 (ILHF…SFWG), and 189 to 209 (ILSG…KYWI).

It belongs to the CemA family.

It localises to the plastid. The protein resides in the chloroplast inner membrane. The enzyme catalyses K(+)(in) + H(+)(out) = K(+)(out) + H(+)(in). Functionally, contributes to K(+)/H(+) antiport activity by supporting proton efflux to control proton extrusion and homeostasis in chloroplasts in a light-dependent manner to modulate photosynthesis. Prevents excessive induction of non-photochemical quenching (NPQ) under continuous-light conditions. Indirectly promotes efficient inorganic carbon uptake into chloroplasts. The chain is Potassium/proton antiporter CemA from Lepidium virginicum (Virginia pepperweed).